A 343-amino-acid polypeptide reads, in one-letter code: DNA-directed RNA polymerase subunit alpha (343 aa).

The tract at residues 1–243 (MTQEIDEKIP…EQLDIFINFD (243 aa)) is alpha N-terminal domain (alpha-NTD). Residues 261 to 343 (ENPYLDKPVE…NAPSDAETEE (83 aa)) are alpha C-terminal domain (alpha-CTD).

This sequence belongs to the RNA polymerase alpha chain family. In terms of assembly, homodimer. The RNAP catalytic core consists of 2 alpha, 1 beta, 1 beta' and 1 omega subunit. When a sigma factor is associated with the core the holoenzyme is formed, which can initiate transcription.

The catalysed reaction is RNA(n) + a ribonucleoside 5'-triphosphate = RNA(n+1) + diphosphate. Its function is as follows. DNA-dependent RNA polymerase catalyzes the transcription of DNA into RNA using the four ribonucleoside triphosphates as substrates. This is DNA-directed RNA polymerase subunit alpha from Desulfotalea psychrophila (strain LSv54 / DSM 12343).